We begin with the raw amino-acid sequence, 581 residues long: uncharacterized protein (581 aa).

Belongs to the UbiD family.

This is an uncharacterized protein from Chlamydia caviae (strain ATCC VR-813 / DSM 19441 / 03DC25 / GPIC) (Chlamydophila caviae).